Reading from the N-terminus, the 301-residue chain is Hydroxymethylglutaryl-CoA lyase (301 aa).

The 268-residue stretch at 4-271 (VKVFEVGPRD…STGVDLEAVA (268 aa)) folds into the Pyruvate carboxyltransferase domain. R12 contacts substrate. A divalent metal cation is bound by residues D13, H204, and H206. C237 is an active-site residue. N246 contacts a divalent metal cation.

The protein belongs to the HMG-CoA lyase family.

The enzyme catalyses (3S)-3-hydroxy-3-methylglutaryl-CoA = acetoacetate + acetyl-CoA. Its pathway is metabolic intermediate metabolism; (S)-3-hydroxy-3-methylglutaryl-CoA degradation; acetoacetate from (S)-3-hydroxy-3-methylglutaryl-CoA: step 1/1. Functionally, involved in the catabolism of branched amino acids such as leucine. This is Hydroxymethylglutaryl-CoA lyase (mvaB) from Pseudomonas mevalonii.